The following is a 231-amino-acid chain: Isoprenyl transferase (231 aa).

Residue Asp-14 is part of the active site. Asp-14 provides a ligand contact to Mg(2+). Substrate-binding positions include Gly-15–Arg-18, Trp-19, Arg-27, His-31, and Ser-59–Glu-61. Asn-62 functions as the Proton acceptor in the catalytic mechanism. Residues Trp-63, Arg-65, Arg-176, and Arg-182–Ser-184 contribute to the substrate site. Position 195 (Glu-195) interacts with Mg(2+).

The protein belongs to the UPP synthase family. Homodimer. Requires Mg(2+) as cofactor.

Functionally, catalyzes the condensation of isopentenyl diphosphate (IPP) with allylic pyrophosphates generating different type of terpenoids. This Aquifex pyrophilus protein is Isoprenyl transferase.